Here is a 193-residue protein sequence, read N- to C-terminus: MKSGSGPLPRLPGSRLQQRARKQLRDGGVIAYSTESCYGLGCRPLDARAIRRVLAIKARPNHKGLIVIAADFEQIRHLVKPLSAAQRAELARYWPGPYTFLLPASRRVPPALRGRHHKIAVRVTAHGEAAALCRRLGTALVSTSANRAGQQSLKTARACRMAFKDKVLTLPGRIGKRRKPSTIIDLESGRVLR.

The region spanning 14–193 is the YrdC-like domain; that stretch reads SRLQQRARKQ…IDLESGRVLR (180 aa).

The protein belongs to the SUA5 family. TsaC subfamily.

It is found in the cytoplasm. It carries out the reaction L-threonine + hydrogencarbonate + ATP = L-threonylcarbamoyladenylate + diphosphate + H2O. In terms of biological role, required for the formation of a threonylcarbamoyl group on adenosine at position 37 (t(6)A37) in tRNAs that read codons beginning with adenine. Catalyzes the conversion of L-threonine, HCO(3)(-)/CO(2) and ATP to give threonylcarbamoyl-AMP (TC-AMP) as the acyladenylate intermediate, with the release of diphosphate. The chain is Threonylcarbamoyl-AMP synthase from Chromobacterium violaceum (strain ATCC 12472 / DSM 30191 / JCM 1249 / CCUG 213 / NBRC 12614 / NCIMB 9131 / NCTC 9757 / MK).